Reading from the N-terminus, the 369-residue chain is Transaldolase (369 aa).

Lys140 acts as the Schiff-base intermediate with substrate in catalysis.

Belongs to the transaldolase family. Type 2 subfamily.

The protein localises to the cytoplasm. It carries out the reaction D-sedoheptulose 7-phosphate + D-glyceraldehyde 3-phosphate = D-erythrose 4-phosphate + beta-D-fructose 6-phosphate. It functions in the pathway carbohydrate degradation; pentose phosphate pathway; D-glyceraldehyde 3-phosphate and beta-D-fructose 6-phosphate from D-ribose 5-phosphate and D-xylulose 5-phosphate (non-oxidative stage): step 2/3. Functionally, transaldolase is important for the balance of metabolites in the pentose-phosphate pathway. This is Transaldolase from Parafrankia sp. (strain EAN1pec).